A 516-amino-acid chain; its full sequence is Cytochrome P450 1A1 (516 aa).

Positions 25–36 are mitochondrial targeting signal; sequence FRPQVPKGLKSP. The O-linked (GlcNAc) serine glycan is linked to Ser63. Phe220 is a binding site for substrate. Position 453 (Cys453) interacts with heme.

Belongs to the cytochrome P450 family. In terms of assembly, interacts with cytosolic chaperones HSP70 and HSP90; this interaction is required for initial targeting to mitochondria. Interacts (via mitochondrial targeting signal) with TOMM40 (via N-terminus); this interaction is required for translocation across the mitochondrial outer membrane. It depends on heme as a cofactor. In terms of tissue distribution, constitutively expressed in liver.

It is found in the endoplasmic reticulum membrane. Its subcellular location is the mitochondrion inner membrane. It localises to the microsome membrane. The protein localises to the cytoplasm. The enzyme catalyses an organic molecule + reduced [NADPH--hemoprotein reductase] + O2 = an alcohol + oxidized [NADPH--hemoprotein reductase] + H2O + H(+). It catalyses the reaction estrone + reduced [NADPH--hemoprotein reductase] + O2 = 2-hydroxyestrone + oxidized [NADPH--hemoprotein reductase] + H2O + H(+). It carries out the reaction estrone + reduced [NADPH--hemoprotein reductase] + O2 = 4-hydroxyestrone + oxidized [NADPH--hemoprotein reductase] + H2O + H(+). The catalysed reaction is estrone + reduced [NADPH--hemoprotein reductase] + O2 = 6alpha-hydroxyestrone + oxidized [NADPH--hemoprotein reductase] + H2O + H(+). The enzyme catalyses estrone + reduced [NADPH--hemoprotein reductase] + O2 = 15alpha-hydroxyestrone + oxidized [NADPH--hemoprotein reductase] + H2O + H(+). It catalyses the reaction estrone + reduced [NADPH--hemoprotein reductase] + O2 = 16alpha-hydroxyestrone + oxidized [NADPH--hemoprotein reductase] + H2O + H(+). It carries out the reaction 17beta-estradiol + reduced [NADPH--hemoprotein reductase] + O2 = 2-hydroxy-17beta-estradiol + oxidized [NADPH--hemoprotein reductase] + H2O + H(+). The catalysed reaction is 17beta-estradiol + reduced [NADPH--hemoprotein reductase] + O2 = 4-hydroxy-17beta-estradiol + oxidized [NADPH--hemoprotein reductase] + H2O + H(+). The enzyme catalyses 17beta-estradiol + reduced [NADPH--hemoprotein reductase] + O2 = 6alpha-hydroxy-17beta-estradiol + oxidized [NADPH--hemoprotein reductase] + H2O + H(+). It catalyses the reaction 17beta-estradiol + reduced [NADPH--hemoprotein reductase] + O2 = 7alpha-hydroxy-17beta-estradiol + oxidized [NADPH--hemoprotein reductase] + H2O + H(+). It carries out the reaction 17beta-estradiol + reduced [NADPH--hemoprotein reductase] + O2 = 15alpha-hydroxy-17beta-estradiol + oxidized [NADPH--hemoprotein reductase] + H2O + H(+). The catalysed reaction is (5Z,8Z,11Z)-eicosatrienoate + reduced [NADPH--hemoprotein reductase] + O2 = 19-hydroxy-(5Z,8Z,11Z)-eicosatrienoate + oxidized [NADPH--hemoprotein reductase] + H2O + H(+). The enzyme catalyses (5Z,8Z,11Z,14Z)-eicosatetraenoate + reduced [NADPH--hemoprotein reductase] + O2 = 16-hydroxy-(5Z,8Z,11Z,14Z)-eicosatetraenoate + oxidized [NADPH--hemoprotein reductase] + H2O + H(+). It catalyses the reaction (5Z,8Z,11Z,14Z)-eicosatetraenoate + reduced [NADPH--hemoprotein reductase] + O2 = 17-hydroxy-(5Z,8Z,11Z,14Z)-eicosatetraenoate + oxidized [NADPH--hemoprotein reductase] + H2O + H(+). It carries out the reaction (5Z,8Z,11Z,14Z)-eicosatetraenoate + reduced [NADPH--hemoprotein reductase] + O2 = 18-hydroxy-(5Z,8Z,11Z,14Z)-eicosatetraenoate + oxidized [NADPH--hemoprotein reductase] + H2O + H(+). The catalysed reaction is (5Z,8Z,11Z,14Z)-eicosatetraenoate + reduced [NADPH--hemoprotein reductase] + O2 = 19-hydroxy-(5Z,8Z,11Z,14Z)-eicosatetraenoate + oxidized [NADPH--hemoprotein reductase] + H2O + H(+). The enzyme catalyses (5Z,8Z,11Z,14Z,17Z)-eicosapentaenoate + reduced [NADPH--hemoprotein reductase] + O2 = 19-hydroxy-(5Z,8Z,11Z,14Z,17Z)-eicosapentaenoate + oxidized [NADPH--hemoprotein reductase] + H2O + H(+). It catalyses the reaction (5Z,8Z,11Z,14Z)-eicosatetraenoate + reduced [NADPH--hemoprotein reductase] + O2 = (8R,9S)-epoxy-(5Z,11Z,14Z)-eicosatrienoate + oxidized [NADPH--hemoprotein reductase] + H2O + H(+). It carries out the reaction (5Z,8Z,11Z,14Z)-eicosatetraenoate + reduced [NADPH--hemoprotein reductase] + O2 = (11R,12S)-epoxy-(5Z,8Z,14Z)-eicosatrienoate + oxidized [NADPH--hemoprotein reductase] + H2O + H(+). The catalysed reaction is (5Z,8Z,11Z,14Z)-eicosatetraenoate + reduced [NADPH--hemoprotein reductase] + O2 = (14S,15R)-epoxy-(5Z,8Z,11Z)-eicosatrienoate + oxidized [NADPH--hemoprotein reductase] + H2O + H(+). The enzyme catalyses (5Z,8Z,11Z,14Z)-eicosatetraenoate + reduced [NADPH--hemoprotein reductase] + O2 = (14R,15S)-epoxy-(5Z,8Z,11Z)-eicosatrienoate + oxidized [NADPH--hemoprotein reductase] + H2O + H(+). It catalyses the reaction (5Z,8Z,11Z,14Z,17Z)-eicosapentaenoate + reduced [NADPH--hemoprotein reductase] + O2 = (17R,18S)-epoxy-(5Z,8Z,11Z,14Z)-eicosatetraenoate + oxidized [NADPH--hemoprotein reductase] + H2O + H(+). It carries out the reaction (4Z,7Z,10Z,13Z,16Z,19Z)-docosahexaenoate + reduced [NADPH--hemoprotein reductase] + O2 = (19S,20R)-epoxy-(4Z,7Z,10Z,13Z,16Z)-docosapentaenoate + oxidized [NADPH--hemoprotein reductase] + H2O + H(+). The catalysed reaction is (4Z,7Z,10Z,13Z,16Z,19Z)-docosahexaenoate + reduced [NADPH--hemoprotein reductase] + O2 = (19R,20S)-epoxy-(4Z,7Z,10Z,13Z,16Z)-docosapentaenoate + oxidized [NADPH--hemoprotein reductase] + H2O + H(+). The enzyme catalyses all-trans-retinol + reduced [NADPH--hemoprotein reductase] + O2 = all-trans-retinal + oxidized [NADPH--hemoprotein reductase] + 2 H2O + H(+). It catalyses the reaction all-trans-retinal + reduced [NADPH--hemoprotein reductase] + O2 = all-trans-retinoate + oxidized [NADPH--hemoprotein reductase] + H2O + 2 H(+). It carries out the reaction (13S)-hydroperoxy-(9Z,11E)-octadecadienoate = 13-oxo-(9Z,11E)-octadecadienoate + H2O. The catalysed reaction is (12S)-hydroperoxy-(5Z,8Z,10E,14Z)-eicosatetraenoate = 12-oxo-(5Z,8Z,10E,14Z)-eicosatetraenoate + H2O. The enzyme catalyses (15S)-hydroperoxy-(5Z,8Z,11Z,13E)-eicosatetraenoate = 15-oxo-(5Z,8Z,11Z,13E)-eicosatetraenoate + H2O. It catalyses the reaction (5S)-hydroperoxy-(6E,8Z,11Z,14Z)-eicosatetraenoate = 5-oxo-(6E,8Z,11Z,14Z)-eicosatetraenoate + H2O. It participates in steroid hormone biosynthesis. Its pathway is lipid metabolism; fatty acid metabolism. It functions in the pathway cofactor metabolism; retinol metabolism. Its function is as follows. A cytochrome P450 monooxygenase involved in the metabolism of various endogenous substrates, including fatty acids, steroid hormones and vitamins. Mechanistically, uses molecular oxygen inserting one oxygen atom into a substrate, and reducing the second into a water molecule, with two electrons provided by NADPH via cytochrome P450 reductase (CPR; NADPH-ferrihemoprotein reductase). Catalyzes the hydroxylation of carbon-hydrogen bonds. Exhibits high catalytic activity for the formation of hydroxyestrogens from estrone (E1) and 17beta-estradiol (E2), namely 2-hydroxy E1 and E2, as well as D-ring hydroxylated E1 and E2 at the C15alpha and C16alpha positions. Displays different regioselectivities for polyunsaturated fatty acids (PUFA) hydroxylation. Catalyzes the epoxidation of double bonds of certain PUFA. Converts arachidonic acid toward epoxyeicosatrienoic acid (EET) regioisomers, 8,9-, 11,12-, and 14,15-EET, that function as lipid mediators in the vascular system. Displays an absolute stereoselectivity in the epoxidation of eicosapentaenoic acid (EPA) producing the 17(R),18(S) enantiomer. May play an important role in all-trans retinoic acid biosynthesis in extrahepatic tissues. Catalyzes two successive oxidative transformation of all-trans retinol to all-trans retinal and then to the active form all-trans retinoic acid. May also participate in eicosanoids metabolism by converting hydroperoxide species into oxo metabolites (lipoxygenase-like reaction, NADPH-independent). The sequence is that of Cytochrome P450 1A1 (CYP1A1) from Cavia porcellus (Guinea pig).